The sequence spans 7192 residues: Nonribosomal peptide synthetase gloA (7192 aa).

Polar residues predominate over residues 1–48 (MTPSRSLENGEKQMNWNESPQTASPKNVLRDSNSNGNYVNGHGTNING). A disordered region spans residues 1 to 52 (MTPSRSLENGEKQMNWNESPQTASPKNVLRDSNSNGNYVNGHGTNINGDGSD). Residues 105–181 (HSTSKFKEEF…GLFATANFRP (77 aa)) form the Carrier 1 domain. An O-(pantetheine 4'-phosphoryl)serine modification is found at serine 142. Residues 239-634 (EDVYPCTPLQ…TYTVQCLCNP (396 aa)) are condensation 1. Positions 675 to 1047 (QDQVNIQPAK…SLMYLGRCDS (373 aa)) are adenylation 1. The Carrier 2 domain maps to 1190–1266 (APSTDAEKQV…DLAFVIQRRL (77 aa)). Residue serine 1227 is modified to O-(pantetheine 4'-phosphoryl)serine. Residues 1316 to 1736 (EDIYPCTPLQ…MSWLSDYDEE (421 aa)) are condensation 2. Residues 1758–2154 (QEQTKLRPNA…GRRDTQIKIR (397 aa)) form an adenylation 2 region. The region spanning 2288-2364 (APSTREECLV…ELAELLAKRS (77 aa)) is the Carrier 3 domain. Serine 2325 bears the O-(pantetheine 4'-phosphoryl)serine mark. The condensation 3 stretch occupies residues 2407–2829 (VEDVYPCTPL…LIAPEDQEQI (423 aa)). Residues 2849-3245 (YKQVMARPQA…GRRDDQIKIR (397 aa)) are adenylation 3. One can recognise a Carrier 4 domain in the interval 3378 to 3455 (TPSTKMEKVI…DLASVMTEHR (78 aa)). At serine 3415 the chain carries O-(pantetheine 4'-phosphoryl)serine. A condensation 4 region spans residues 3502 to 3891 (EDIYPCTALQ…NGVLDQFVYI (390 aa)). Residues 3920–4320 (QEQALARPTA…ARRDMQVKIR (401 aa)) are adenylation 4. The 77-residue stretch at 4453 to 4529 (LPSTQVELQL…ELAVILDGRK (77 aa)) folds into the Carrier 5 domain. Serine 4490 is subject to O-(pantetheine 4'-phosphoryl)serine. The interval 4574–4971 (EDIYPCTPLQ…QFEYVVQKFH (398 aa)) is condensation 5. Residues 5013–5414 (DDHVAARPMA…GRQDLQVKIR (402 aa)) form an adenylation 5 region. The region spanning 5551–5627 (APDTDLGRLI…DLVNTLSNRS (77 aa)) is the Carrier 6 domain. Position 5588 is an O-(pantetheine 4'-phosphoryl)serine (serine 5588). Residues 5674–6071 (EDVYPSTPLQ…CVVQRILTQS (398 aa)) are condensation 6. Residues 6111–6507 (QAQVKKSPAA…GRRDLQVKIR (397 aa)) form an adenylation 6 region. Residues 6645-6721 (NPSTTMERQL…DLAVVLTDRL (77 aa)) enclose the Carrier 7 domain. An O-(pantetheine 4'-phosphoryl)serine modification is found at serine 6682. Residues 6795 to 7178 (NGPCDTRALK…NPLSPVKQVL (384 aa)) form a condensation 7 region.

This sequence belongs to the NRP synthetase family.

It functions in the pathway mycotoxin biosynthesis. Nonribosomal peptide synthetase; part of the gene cluster that mediates the biosynthesis of pneumocandins, lipohexapeptides of the echinocandin family that prevent fungal cell wall formation by non-competitive inhibition of beta-1,3-glucan synthase. The 10,12-dimethylmyristoyl side chain is synthesized by the reducing polyketide synthase gloL/GLPKS4. The thioesterase gloN/GLHYD exclusively interacts with gloL/GLPKS4 to maintain turnover of the polyketide side chain. The 10R,12S-dimethylmyristic acid is then transferred to the first thiolation domain of the nonribosomal peptide synthetase gloA/GLNRPS4 by the acyl-AMP ligase gloD/GLligase, followed by its acylation to L-ornithine to trigger elongation of the cyclic hexapeptide. L-ornithine, 4R-hydroxyl-L-proline (generated from L-proline by the dioxygenase gloF/GLOXY2), 3S-hydroxyl-L-homotyrosine (generated by gloG/GLHtyB, gloH/GLHtyA, gloI/GLHtyC, gloJ/GLHtyD and hydroxylated at C-3 by the dioxygenase gloM/GLOXY1), 3R-hydroxyl-L-glutamine (generated from L-glutamine probably by the dioxygenase gloE/GLOXY3) and 3S-hydroxyl-L-proline (generated from L-proline by the dioxygenase gloF/GLOXY2 to yield pneumocandin B0), or 3S-hydroxyl-4S-methyl-L-proline (generated from L-leucine by the dioxygenase gloC/GLOXY4 to yield pneumocandin A0) are sequentially added to the growing chain. The last C domain of gloA/GLNRPS4 is proposed to be responsible for cyclization by condensation to form the peptide bond between L-ornithine and 3S-hydroxyl-4S-methyl-L-proline (for pneumocandin A0) or 3S-hydroxyl-L-proline (for pneumocandin B0). Finally, the subsequent C-4 hydroxylation of 3S-hydroxyl-L-homotyrosine and L-ornithine dihydroxylation at C-4 and C-5 are performed by the cytochrome P450 monooxygenases gloP/GLP450-1 and gloO/GLP450-2, respectively. In Glarea lozoyensis (strain ATCC 20868 / MF5171), this protein is Nonribosomal peptide synthetase gloA.